The primary structure comprises 206 residues: Macrophage immunometabolism regulator (206 aa).

Methionine 1 bears the N-acetylmethionine mark. Positions 1–41 (MEVDINGESRSTLTTLPFPGAEANSPGKAEAEKPRCSSTPC) are disordered. A phosphoserine mark is found at serine 25, serine 140, and serine 167.

Belongs to the UNC119-binding protein family. In terms of assembly, interacts with UNC119 and UNC119B; interaction preferentially takes place when UNC119 and UNC119B are unliganded with myristoylated proteins.

It is found in the cytoplasm. The protein localises to the cell projection. The protein resides in the cilium. Its function is as follows. Regulates the macrophage function, by enhancing the resolution of inflammation and wound repair functions mediated by M2 macrophages. The regulation of macrophage function is, due at least in part, to its ability to inhibit glycolysis. May also play a role in trafficking of proteins via its interaction with UNC119 and UNC119B cargo adapters: may help the release of UNC119 and UNC119B cargo or the recycling of UNC119 and UNC119B. May play a role in ciliary membrane localization via its interaction with UNC119B and protein transport into photoreceptor cells. The sequence is that of Macrophage immunometabolism regulator (MACIR) from Pongo abelii (Sumatran orangutan).